The primary structure comprises 156 residues: CD-NTase/cGAS isopeptidase (156 aa).

An MPN domain is found at 16 to 156 (LVVIMGHVVT…LITVFKKIES (141 aa)). The Proton donor/acceptor role is filled by E39. H101, H103, and D114 together coordinate Zn(2+). The JAMM motif signature appears at 101 to 114 (HTHPEDRPFPSATD).

The protein belongs to the peptidase M67B family. Cap3 isopeptidase subfamily. It depends on Zn(2+) as a cofactor.

Cleavage of conjugated proteins is inhibited by EDTA. In terms of biological role, metalloprotease priming reversal component of a CBASS system. CBASS (cyclic oligonucleotide-based antiphage signaling system) provides immunity against bacteriophages. The CD-NTase protein (DncV) synthesizes cyclic nucleotides in response to infection; these serve as specific second messenger signals. The signals activate a diverse range of effectors, leading to bacterial cell death and thus abortive phage infection. A type II-A(GA) CBASS system. Reverses the primed state of DncV, the CD-NTase. Cleaves a DncV-GFP (green fluorescent protein) fusion protein precisely at the C-terminus of DncV. Overexpression decreases the efficacy of CBASS protection against phages T2, T4, T5 and T6, blocks formation of DncV-conjugates in vivo, and inhibits in vivo activation of DncV. Antagonism of phage defense upon overexpression is CBASS-system specific, Cap3 from this bacteria only antagonizes its cognate CBASS system and not that of C.freundii, E.coli or E.hormaechei. Functionally, protects E.coli against phage infection. When the CBASS operon (capV-dncV-cap2-cap3) is introduced in E.coli MG1655 there is about 100-fold protection against phages P1 and T2. When the operon is introduced in E.coli MG1655 there is a more than 10(3) decrease in the efficiency of T2 plaque formation. Protects 100-fold against phage T5, offers no protection against T7. When the operon is introduced in E.coli MG1655 it protects against phages T2, T4, T5 and T6. Another paper shows the operon confers protection against phages P1, T2, T5 and T6 but not T4 or lambda. The polypeptide is CD-NTase/cGAS isopeptidase (Vibrio cholerae serotype O1 (strain ATCC 39315 / El Tor Inaba N16961)).